The chain runs to 299 residues: MSESAELTELYSAIEETTRVVGAPCRRDTVRPILTAYEDVIAQSVISFRVQTGTSDAGDLDCRFTLLPKDMDPYATALSNGLTAKTDHPVGSLLEEVHRQFPVDCYGIDFGAVGGFKKAWSFFRPDSLQSASDLAALPSMPSGVSENLGLFDRYGMTDTVSVVGFDYAKRSVNLYFTGASPESFEPRGIQAILRECGLPEPSDELLRFGEEAFAIYVTLSWDSQKIERVTYSVNTPDPMALPVRIDTRIEQLVKDAPLGSAGHRYVYGVTATPKGEYHKIQKYFQWQSRVEKMLTADAG.

It belongs to the aromatic prenyltransferase family.

It carries out the reaction 5,10-dihydrophenazine 1-carboxylate + dimethylallyl diphosphate = 5,10-dihydro-9-dimethylallylphenazine 1-carboxylate + diphosphate. It functions in the pathway antibiotic biosynthesis; phenazine biosynthesis. With respect to regulation, does not require magnesium or any other divalent metal ions for activity. Involved in the biosynthesis of prenylated phenazines. Catalyzes the transfer of a dimethylallyl moiety to C-9 of 5,10-dihydrophenazine 1-carboxylate (dihydro-PCA). Specific for both dimethylallyl diphosphate and dihydro-PCA. The polypeptide is 5,10-dihydrophenazine-1-carboxylate 9-dimethylallyltransferase (Streptomyces anulatus (Streptomyces chrysomallus)).